The chain runs to 413 residues: Prophage integrase IntA (413 aa).

Positions 105–186 (NTFLLVAERW…RINEVMIYAQ (82 aa)) constitute a Core-binding (CB) domain. The region spanning 209-386 (KNMPSIRPDQ…DYLEQRRPMM (178 aa)) is the Tyr recombinase domain. Residues Arg-248, Lys-275, His-337, Arg-340, and His-363 contribute to the active site. The active-site O-(3'-phospho-DNA)-tyrosine intermediate is Tyr-373.

Belongs to the 'phage' integrase family.

In terms of biological role, integrase is necessary for integration of the phage into the host genome by site-specific recombination. In conjunction with excisionase, integrase is also necessary for excision of the prophage from the host genome. Part of the cryptic P4-like prophage CP4-57, it excises the prophage when overexpressed, which also requires integration host factor (encoded by ihfA and ihfB). Overexpression of AlpA leads to excision of the CP4-57 prophage, which inactivates ssrA (the gene upstream of the prophage) that encodes tmRNA which is required to rescue stalled ribosomes in a process known as trans-translation. This Escherichia coli (strain K12) protein is Prophage integrase IntA (intA).